The chain runs to 1307 residues: Rho1 guanine nucleotide exchange factor TUS1 (1307 aa).

The segment covering 1–10 has biased composition (polar residues); the sequence is MYRYNRSSPF. 3 disordered regions span residues 1–144, 164–194, and 219–239; these read MYRY…FIGN, PFANGFSPNSPKSPRDSSKQQAHFSDESDLR, and EDSEFFTKPPPPLSTSRNVSG. Basic and acidic residues predominate over residues 12–29; that stretch reads RTPEKRVSRQESQRKSIE. The span at 37–79 shows a compositional bias: polar residues; it reads NTRNSFLDDSDNGTDNISIGWTPISDTQQFQSPVPQAFTFTSK. The span at 87–97 shows a compositional bias: low complexity; sequence TSSSESTPKST. The span at 176–194 shows a compositional bias: basic and acidic residues; sequence SPRDSSKQQAHFSDESDLR. Positions 467-657 constitute a DH domain; that stretch reads QRQSFIFDLI…EKLNFEVNQV (191 aa). The 163-residue stretch at 715–877 folds into the PH domain; it reads KLVLSGTVYK…WIDAIMESFK (163 aa). The interval 780-802 is disordered; that stretch reads TSKQPLRNYSQKEHKSPMHNFST. Residues 938-1279 enclose the CNH domain; it reads TTRILCCEDV…KLASSERREK (342 aa).

In terms of assembly, interacts with RHO1.

In terms of biological role, guanine nucleotide-exchange factor (GEF) for RHO1 that stimulates the exchange of RHO1 GDP-bound form into GTP-bound form. Required for signaling of cell wall defects to RHO1. This Saccharomyces cerevisiae (strain ATCC 204508 / S288c) (Baker's yeast) protein is Rho1 guanine nucleotide exchange factor TUS1 (TUS1).